The following is a 58-amino-acid chain: Photosystem II reaction center X protein (58 aa).

Residues 27–47 (IGSFLAAAAFIVVPAASFLIW) traverse the membrane as a helical segment.

The protein belongs to the PsbX family. Type 2 subfamily. PSII consists of a core antenna complex that captures photons, and an electron transfer chain that converts photonic excitation into a charge separation. PSII forms dimeric complexes.

It is found in the cellular thylakoid membrane. In terms of biological role, involved in the binding and/or turnover of quinones at the Q(B) site of Photosystem II. In Prochlorococcus marinus (strain MIT 9211), this protein is Photosystem II reaction center X protein.